Reading from the N-terminus, the 773-residue chain is Polyribonucleotide nucleotidyltransferase (773 aa).

Residues aspartate 532 and aspartate 538 each coordinate Mg(2+). In terms of domain architecture, KH spans 598–657; sequence PRVITIKVPVDKIGEVIGPKGKVINAITEETGAQISIEDDGTVFVGATDGLSAQAAINKI. Residues 669 to 738 form the S1 motif domain; it reads GERFLGTVVK…KRGKISLVLV (70 aa). Residues 749-773 are disordered; sequence APADAGAAQEFGSGTAPADAATASS.

This sequence belongs to the polyribonucleotide nucleotidyltransferase family. Mg(2+) is required as a cofactor.

It localises to the cytoplasm. It catalyses the reaction RNA(n+1) + phosphate = RNA(n) + a ribonucleoside 5'-diphosphate. In terms of biological role, involved in mRNA degradation. Catalyzes the phosphorolysis of single-stranded polyribonucleotides processively in the 3'- to 5'-direction. The chain is Polyribonucleotide nucleotidyltransferase from Mycobacterium leprae (strain Br4923).